The primary structure comprises 412 residues: Proteasome-activating nucleotidase (412 aa).

Positions 18–72 form a coiled coil; sequence YRYLVDRVAGMESQNQELKEQIRQLESDKRYIETQKIRYEREVRKLKSEIEHLKT. ATP contacts are provided by residues 197-202 and His336; that span reads GTGKTL. The docks into pockets in the proteasome alpha-ring to cause gate opening stretch occupies residues 410–412; the sequence is MFA.

It belongs to the AAA ATPase family. Homohexamer. The hexameric complex has a two-ring architecture resembling a top hat that caps the 20S proteasome core at one or both ends. Upon ATP-binding, the C-terminus of PAN interacts with the alpha-rings of the proteasome core by binding to the intersubunit pockets.

It is found in the cytoplasm. Functionally, ATPase which is responsible for recognizing, binding, unfolding and translocation of substrate proteins into the archaeal 20S proteasome core particle. Is essential for opening the gate of the 20S proteasome via an interaction with its C-terminus, thereby allowing substrate entry and access to the site of proteolysis. Thus, the C-termini of the proteasomal ATPase function like a 'key in a lock' to induce gate opening and therefore regulate proteolysis. Unfolding activity requires energy from ATP hydrolysis, whereas ATP binding alone promotes ATPase-20S proteasome association which triggers gate opening, and supports translocation of unfolded substrates. In Methanospirillum hungatei JF-1 (strain ATCC 27890 / DSM 864 / NBRC 100397 / JF-1), this protein is Proteasome-activating nucleotidase.